The following is a 262-amino-acid chain: Acyl-[acyl-carrier-protein]--UDP-N-acetylglucosamine O-acyltransferase (262 aa).

This sequence belongs to the transferase hexapeptide repeat family. LpxA subfamily. As to quaternary structure, homotrimer.

The protein localises to the cytoplasm. It carries out the reaction a (3R)-hydroxyacyl-[ACP] + UDP-N-acetyl-alpha-D-glucosamine = a UDP-3-O-[(3R)-3-hydroxyacyl]-N-acetyl-alpha-D-glucosamine + holo-[ACP]. It participates in glycolipid biosynthesis; lipid IV(A) biosynthesis; lipid IV(A) from (3R)-3-hydroxytetradecanoyl-[acyl-carrier-protein] and UDP-N-acetyl-alpha-D-glucosamine: step 1/6. In terms of biological role, involved in the biosynthesis of lipid A, a phosphorylated glycolipid that anchors the lipopolysaccharide to the outer membrane of the cell. The protein is Acyl-[acyl-carrier-protein]--UDP-N-acetylglucosamine O-acyltransferase of Yersinia enterocolitica serotype O:8 / biotype 1B (strain NCTC 13174 / 8081).